The following is a 620-amino-acid chain: PAN2-PAN3 deadenylation complex subunit PAN3 (620 aa).

The C3H1-type zinc-finger motif lies at 7–36 (SAKGTLCKNILIYGYCKYENKGCAFSHRRN). Disordered stretches follow at residues 39 to 73 (ANSGPGATPAKSVATTPTSDKRKFNVNTPSFQPST) and 95 to 168 (VFVP…QPGP). 2 stretches are compositionally biased toward polar residues: residues 63–73 (NVNTPSFQPST) and 101–126 (TPASPAQSTPSTGNQEQPMPTSTVSN). The segment at 226 to 482 (QSYPGGPEIV…LESYIRKHLA (257 aa)) is pseudokinase domain. ATP contacts are provided by residues R274, 323-330 (DYYPNAST), and 380-381 (SK). The stretch at 483-521 (IRLLDVVDMLEDSNDYLESQLSTELENARLVRLMTKINF) forms a coiled coil. Positions 522–620 (IVDRPEWDNE…SVFRTITRGK (99 aa)) are knob domain.

It belongs to the protein kinase superfamily. PAN3 family. Homodimer. Forms a heterotrimer with a catalytic subunit PAN2 to form the poly(A)-nuclease (PAN) deadenylation complex. Interacts (via PAM-2 motif) with poly(A)-binding protein PAB1 (via PABC domain), conferring substrate specificity of the enzyme complex.

The protein localises to the cytoplasm. Regulatory subunit of the poly(A)-nuclease (PAN) deadenylation complex, one of two cytoplasmic mRNA deadenylases involved in mRNA turnover. PAN specifically shortens poly(A) tails of RNA and the activity is stimulated by poly(A)-binding protein PAB1. PAN deadenylation is followed by rapid degradation of the shortened mRNA tails by the CCR4-NOT complex. Deadenylated mRNAs are then degraded by two alternative mechanisms, namely exosome-mediated 3'-5' exonucleolytic degradation, or deadenylation-dependent mRNA decaping and subsequent 5'-3' exonucleolytic degradation by XRN1. May also be involved in post-transcriptional maturation of mRNA poly(A) tails. PAN3 acts as a positive regulator for PAN activity, recruiting the catalytic subunit PAN2 to mRNA via its interaction with RNA and with PAB1. The chain is PAN2-PAN3 deadenylation complex subunit PAN3 from Meyerozyma guilliermondii (strain ATCC 6260 / CBS 566 / DSM 6381 / JCM 1539 / NBRC 10279 / NRRL Y-324) (Yeast).